The primary structure comprises 227 residues: 7-cyano-7-deazaguanine synthase (227 aa).

Position 8–18 (8–18 (VSGGADSATVL)) interacts with ATP. The Zn(2+) site is built by cysteine 192, cysteine 202, cysteine 205, and cysteine 208.

This sequence belongs to the QueC family. Zn(2+) is required as a cofactor.

The catalysed reaction is 7-carboxy-7-deazaguanine + NH4(+) + ATP = 7-cyano-7-deazaguanine + ADP + phosphate + H2O + H(+). It participates in purine metabolism; 7-cyano-7-deazaguanine biosynthesis. Catalyzes the ATP-dependent conversion of 7-carboxy-7-deazaguanine (CDG) to 7-cyano-7-deazaguanine (preQ(0)). The sequence is that of 7-cyano-7-deazaguanine synthase from Rickettsia akari (strain Hartford).